Reading from the N-terminus, the 191-residue chain is Glycerol-3-phosphate acyltransferase (191 aa).

Transmembrane regions (helical) follow at residues 5–25, 50–70, 78–98, 112–132, and 153–173; these read IVFVLSYILGSIPFSLVITKI, CIAALALLLDSLKGFIAVYIA, SFHMYASAILVVLGHMFPVWL, ILIALNISLVLAFVFVWLAVF, and SFFFQRDLFFTLLTVAILIFF.

This sequence belongs to the PlsY family. As to quaternary structure, probably interacts with PlsX.

Its subcellular location is the cell membrane. The catalysed reaction is an acyl phosphate + sn-glycerol 3-phosphate = a 1-acyl-sn-glycero-3-phosphate + phosphate. The protein operates within lipid metabolism; phospholipid metabolism. Its function is as follows. Catalyzes the transfer of an acyl group from acyl-phosphate (acyl-PO(4)) to glycerol-3-phosphate (G3P) to form lysophosphatidic acid (LPA). This enzyme utilizes acyl-phosphate as fatty acyl donor, but not acyl-CoA or acyl-ACP. This Wolbachia sp. subsp. Brugia malayi (strain TRS) protein is Glycerol-3-phosphate acyltransferase.